Consider the following 637-residue polypeptide: Transcription factor GLABRA 3 (637 aa).

Residues Asp437–Leu486 enclose the bHLH domain. Positions Arg497–Arg521 are disordered. Residues Asn541–Cys637 are binding with MYB0/GL1 and MYB23.

In terms of assembly, efficient DNA binding requires dimerization with another bHLH protein. Homodimer and heterodimer with BHLH2. Interacts directly with TTG1 and MYB0/GL1 to form a complex. Its interaction with TRY prevents MYB0/GL1 binding. Interacts with MYB75/PAP1, MYB90/PAP2, TT2, CPC, MYB23 and MYB66/WER. Interacts with MYB82. As to expression, mostly expressed in roots and flowers. Also present in stems and leaves, and, to a lower extent, in hypocotyls. Expressed in epidermal root hair cells (trichoblasts) and moves to root hairless cells (atrichoblasts) by a cell-to-cell movement through plasmodesmata (at protein level).

The protein localises to the nucleus. Transcription activator, when associated with MYB75/PAP1, MYB90/PAP2 or TT2. Involved in epidermal cell fate specification. Negatively regulates stomata formation, but, in association with TTG1 and MYB0/GL1, promotes trichome formation, branching and endoreplication. Also regulates trichome cell wall maturation. Together with MYB66/WER, promotes the formation of non-hair cells in root epidermis cells in the N position. Whereas together with CPC, promotes the formation of hair cells in root epidermis cells in the H position by inhibiting non-hair cell formation. Also seems to play a role in the activation of anthocyanin biosynthesis, probably together with MYB75/PAP1. Activates the transcription of GL2. The sequence is that of Transcription factor GLABRA 3 (GL3) from Arabidopsis thaliana (Mouse-ear cress).